A 155-amino-acid chain; its full sequence is Small ribosomal subunit protein uS7c (155 aa).

Belongs to the universal ribosomal protein uS7 family. Part of the 30S ribosomal subunit.

The protein localises to the plastid. It localises to the chloroplast. In terms of biological role, one of the primary rRNA binding proteins, it binds directly to 16S rRNA where it nucleates assembly of the head domain of the 30S subunit. This is Small ribosomal subunit protein uS7c (rps7) from Stewartia pseudocamellia (Japanese stewartia).